The sequence spans 693 residues: Subtilisin-like protease SBT4.10 (693 aa).

Residues 1–25 (MAKLREASFCALACVLVLFLSFVSA) form the signal peptide. The propeptide at 26–113 (DTYNRQDKQV…VFPSKKYKLH (88 aa)) is activation peptide. In terms of domain architecture, Inhibitor I9 spans 35 to 113 (VYVVYMGSLP…VFPSKKYKLH (79 aa)). A Peptidase S8 domain is found at 117–536 (SWDFMGLKEG…SGHIDPIAAI (420 aa)). The active-site Charge relay system is Asp145. Asn176 carries N-linked (GlcNAc...) asparagine glycosylation. His200 acts as the Charge relay system in catalysis. Asn215, Asn223, Asn368, Asn413, and Asn467 each carry an N-linked (GlcNAc...) asparagine glycan. The PA domain occupies 354 to 396 (QYPLVYETSVEKCNNESLTTLALSFLTLTPQSNEQIISMFHTL). Ser475 functions as the Charge relay system in the catalytic mechanism. N-linked (GlcNAc...) asparagine glycans are attached at residues Asn559, Asn603, and Asn613.

The protein belongs to the peptidase S8 family. The C-terminal propeptide is autocleaved.

It localises to the secreted. The protein is Subtilisin-like protease SBT4.10 of Arabidopsis thaliana (Mouse-ear cress).